The chain runs to 252 residues: Imidazole glycerol phosphate synthase subunit HisF (252 aa).

Active-site residues include Asp-11 and Asp-130.

This sequence belongs to the HisA/HisF family. As to quaternary structure, heterodimer of HisH and HisF.

It localises to the cytoplasm. The enzyme catalyses 5-[(5-phospho-1-deoxy-D-ribulos-1-ylimino)methylamino]-1-(5-phospho-beta-D-ribosyl)imidazole-4-carboxamide + L-glutamine = D-erythro-1-(imidazol-4-yl)glycerol 3-phosphate + 5-amino-1-(5-phospho-beta-D-ribosyl)imidazole-4-carboxamide + L-glutamate + H(+). Its pathway is amino-acid biosynthesis; L-histidine biosynthesis; L-histidine from 5-phospho-alpha-D-ribose 1-diphosphate: step 5/9. Functionally, IGPS catalyzes the conversion of PRFAR and glutamine to IGP, AICAR and glutamate. The HisF subunit catalyzes the cyclization activity that produces IGP and AICAR from PRFAR using the ammonia provided by the HisH subunit. In Acinetobacter baumannii (strain AB307-0294), this protein is Imidazole glycerol phosphate synthase subunit HisF.